The sequence spans 393 residues: NAD(P)H-quinone oxidoreductase subunit H, chloroplastic (393 aa).

Belongs to the complex I 49 kDa subunit family. In terms of assembly, NDH is composed of at least 16 different subunits, 5 of which are encoded in the nucleus.

The protein localises to the plastid. The protein resides in the chloroplast thylakoid membrane. The enzyme catalyses a plastoquinone + NADH + (n+1) H(+)(in) = a plastoquinol + NAD(+) + n H(+)(out). The catalysed reaction is a plastoquinone + NADPH + (n+1) H(+)(in) = a plastoquinol + NADP(+) + n H(+)(out). NDH shuttles electrons from NAD(P)H:plastoquinone, via FMN and iron-sulfur (Fe-S) centers, to quinones in the photosynthetic chain and possibly in a chloroplast respiratory chain. The immediate electron acceptor for the enzyme in this species is believed to be plastoquinone. Couples the redox reaction to proton translocation, and thus conserves the redox energy in a proton gradient. This chain is NAD(P)H-quinone oxidoreductase subunit H, chloroplastic, found in Spinacia oleracea (Spinach).